Reading from the N-terminus, the 305-residue chain is Ribosomal RNA small subunit methyltransferase H (305 aa).

S-adenosyl-L-methionine-binding positions include 30–32 (GGH), D49, F74, D96, and Q103.

It belongs to the methyltransferase superfamily. RsmH family.

It localises to the cytoplasm. The enzyme catalyses cytidine(1402) in 16S rRNA + S-adenosyl-L-methionine = N(4)-methylcytidine(1402) in 16S rRNA + S-adenosyl-L-homocysteine + H(+). Its function is as follows. Specifically methylates the N4 position of cytidine in position 1402 (C1402) of 16S rRNA. The chain is Ribosomal RNA small subunit methyltransferase H from Francisella tularensis subsp. novicida (strain U112).